Here is an 886-residue protein sequence, read N- to C-terminus: Alanine--tRNA ligase (886 aa).

Zn(2+) contacts are provided by His-570, His-574, Cys-672, and His-676.

It belongs to the class-II aminoacyl-tRNA synthetase family. Zn(2+) is required as a cofactor.

It localises to the cytoplasm. It carries out the reaction tRNA(Ala) + L-alanine + ATP = L-alanyl-tRNA(Ala) + AMP + diphosphate. Its function is as follows. Catalyzes the attachment of alanine to tRNA(Ala) in a two-step reaction: alanine is first activated by ATP to form Ala-AMP and then transferred to the acceptor end of tRNA(Ala). Also edits incorrectly charged Ser-tRNA(Ala) and Gly-tRNA(Ala) via its editing domain. This is Alanine--tRNA ligase from Acidothermus cellulolyticus (strain ATCC 43068 / DSM 8971 / 11B).